A 229-amino-acid polypeptide reads, in one-letter code: 5'-methylthioadenosine/S-adenosylhomocysteine nucleosidase (229 aa).

Glu-12 functions as the Proton acceptor in the catalytic mechanism. Substrate is bound by residues Gly-78, Ile-152, and 173-174 (ME). Residue Asp-197 is the Proton donor of the active site.

Belongs to the PNP/UDP phosphorylase family. MtnN subfamily.

The catalysed reaction is S-adenosyl-L-homocysteine + H2O = S-(5-deoxy-D-ribos-5-yl)-L-homocysteine + adenine. The enzyme catalyses S-methyl-5'-thioadenosine + H2O = 5-(methylsulfanyl)-D-ribose + adenine. It catalyses the reaction 5'-deoxyadenosine + H2O = 5-deoxy-D-ribose + adenine. It participates in amino-acid biosynthesis; L-methionine biosynthesis via salvage pathway; S-methyl-5-thio-alpha-D-ribose 1-phosphate from S-methyl-5'-thioadenosine (hydrolase route): step 1/2. In terms of biological role, catalyzes the irreversible cleavage of the glycosidic bond in both 5'-methylthioadenosine (MTA) and S-adenosylhomocysteine (SAH/AdoHcy) to adenine and the corresponding thioribose, 5'-methylthioribose and S-ribosylhomocysteine, respectively. Also cleaves 5'-deoxyadenosine, a toxic by-product of radical S-adenosylmethionine (SAM) enzymes, into 5-deoxyribose and adenine. This Pasteurella multocida (strain Pm70) protein is 5'-methylthioadenosine/S-adenosylhomocysteine nucleosidase.